Reading from the N-terminus, the 217-residue chain is MMAAGPRTSLLLAFALLCLPWTQVVGAFPAMSLSGLFANAVLRAQHLHQLAADTFKEFERTYIPGGQRYSIQNTQVAFCFSETIPAPTGKNEAQQKSDLELLRISLLLIQSWLGPLQFLSRVFTNSLVFGTSDRVYEKLKDLEEGILALMRELEDGTPRAGQILKQTYDKFDTNMRSDDALLKNYGLLSCFRKDLHKTETYLRVMKCRRFGEASCAF.

A signal peptide spans M1 to G26. H46 provides a ligand contact to Zn(2+). C79 and C190 are oxidised to a cystine. S132 is modified (phosphoserine). E199 serves as a coordination point for Zn(2+). C207 and C215 are joined by a disulfide.

Belongs to the somatotropin/prolactin family.

The protein resides in the secreted. Its function is as follows. Plays an important role in growth control. Its major role in stimulating body growth is to stimulate the liver and other tissues to secrete IGF1. It stimulates both the differentiation and proliferation of myoblasts. It also stimulates amino acid uptake and protein synthesis in muscle and other tissues. The protein is Somatotropin (GH1) of Bos mutus grunniens (Wild yak).